A 901-amino-acid polypeptide reads, in one-letter code: Probable inorganic carbon transporter subunit DabA (901 aa).

4 residues coordinate Zn(2+): cysteine 424, aspartate 426, histidine 606, and cysteine 621.

The protein belongs to the inorganic carbon transporter (TC 9.A.2) DabA family. As to quaternary structure, forms a complex with DabB. Requires Zn(2+) as cofactor.

The protein localises to the cell membrane. Part of an energy-coupled inorganic carbon pump. This is Probable inorganic carbon transporter subunit DabA from Staphylococcus aureus (strain Mu3 / ATCC 700698).